The chain runs to 543 residues: MATSLSADSPQQLSSLSTQQTILLLLVSVLAIVHLGQWLLRQWRRKPWSSPPGPFPWPLIGNAASVGRASHLYFARLARRYGDVFQIRLGSCPVVVLNGESAIHQALVQQGGVFADRPPFASFRVVSGGRSLAFGHYSERWKERRRAAYGTMRAFSTRHPRSRGLLEGHALGEARELVAVLVRRCAGGACLDPTQPIIVAVANVMSAVCFGCRYNHDDAEFLELLSHNEEFGRTVGAGSLVDVMPWLQLFPNPVRTIFREFEQINRNFSNFVLDKFLRHRESLVPGAAPRDMMDAFILSAEKKATGDPGDSPSGLDLEDVPATITDIFGASQDTLSTALLWLLILFTRYPDVQARVQAELDQVVGRDRLPCMSDQPNLPYVMAFLYESMRFTSFLPVTLPHATTANTFVLGYYIPKNTVVFVNQWSVNHDPAKWSNPEDFDPARFLDKDGFINKALASSVMIFSVGKRRCIGEELSKTLLFLFISILAHQCNFKANQNEPSNMSFSYGLSIKPKSFKIHVSLRESMKLLDSAVEKLQAEEACQ.

Position 470 (cysteine 470) interacts with heme.

This sequence belongs to the cytochrome P450 family. Heme serves as cofactor.

The protein resides in the endoplasmic reticulum membrane. The protein localises to the microsome membrane. It is found in the mitochondrion. The enzyme catalyses an organic molecule + reduced [NADPH--hemoprotein reductase] + O2 = an alcohol + oxidized [NADPH--hemoprotein reductase] + H2O + H(+). It catalyses the reaction 17beta-estradiol + reduced [NADPH--hemoprotein reductase] + O2 = 2-hydroxy-17beta-estradiol + oxidized [NADPH--hemoprotein reductase] + H2O + H(+). The catalysed reaction is 17beta-estradiol + reduced [NADPH--hemoprotein reductase] + O2 = 4-hydroxy-17beta-estradiol + oxidized [NADPH--hemoprotein reductase] + H2O + H(+). It carries out the reaction estrone + reduced [NADPH--hemoprotein reductase] + O2 = 2-hydroxyestrone + oxidized [NADPH--hemoprotein reductase] + H2O + H(+). The enzyme catalyses estrone + reduced [NADPH--hemoprotein reductase] + O2 = 4-hydroxyestrone + oxidized [NADPH--hemoprotein reductase] + H2O + H(+). It catalyses the reaction testosterone + reduced [NADPH--hemoprotein reductase] + O2 = 6beta,17beta-dihydroxyandrost-4-en-3-one + oxidized [NADPH--hemoprotein reductase] + H2O + H(+). The catalysed reaction is progesterone + reduced [NADPH--hemoprotein reductase] + O2 = 6beta-hydroxyprogesterone + oxidized [NADPH--hemoprotein reductase] + H2O + H(+). It carries out the reaction progesterone + reduced [NADPH--hemoprotein reductase] + O2 = 16alpha-hydroxyprogesterone + oxidized [NADPH--hemoprotein reductase] + H2O + H(+). The enzyme catalyses all-trans-retinol + reduced [NADPH--hemoprotein reductase] + O2 = all-trans-retinal + oxidized [NADPH--hemoprotein reductase] + 2 H2O + H(+). It catalyses the reaction all-trans-retinal + reduced [NADPH--hemoprotein reductase] + O2 = all-trans-retinoate + oxidized [NADPH--hemoprotein reductase] + H2O + 2 H(+). The catalysed reaction is (5Z,8Z,11Z,14Z)-eicosatetraenoate + reduced [NADPH--hemoprotein reductase] + O2 = (8R,9S)-epoxy-(5Z,11Z,14Z)-eicosatrienoate + oxidized [NADPH--hemoprotein reductase] + H2O + H(+). It carries out the reaction (5Z,8Z,11Z,14Z)-eicosatetraenoate + reduced [NADPH--hemoprotein reductase] + O2 = (11R,12S)-epoxy-(5Z,8Z,14Z)-eicosatrienoate + oxidized [NADPH--hemoprotein reductase] + H2O + H(+). The enzyme catalyses (5Z,8Z,11Z,14Z)-eicosatetraenoate + reduced [NADPH--hemoprotein reductase] + O2 = (11S,12R)-epoxy-(5Z,8Z,14Z)-eicosatrienoate + oxidized [NADPH--hemoprotein reductase] + H2O + H(+). It catalyses the reaction (5Z,8Z,11Z,14Z)-eicosatetraenoate + reduced [NADPH--hemoprotein reductase] + O2 = (14S,15R)-epoxy-(5Z,8Z,11Z)-eicosatrienoate + oxidized [NADPH--hemoprotein reductase] + H2O + H(+). The catalysed reaction is (5Z,8Z,11Z,14Z)-eicosatetraenoate + reduced [NADPH--hemoprotein reductase] + O2 = (14R,15S)-epoxy-(5Z,8Z,11Z)-eicosatrienoate + oxidized [NADPH--hemoprotein reductase] + H2O + H(+). It carries out the reaction (5S)-hydroperoxy-(6E,8Z,11Z,14Z)-eicosatetraenoate = 5-oxo-(6E,8Z,11Z,14Z)-eicosatetraenoate + H2O. The enzyme catalyses (12S)-hydroperoxy-(5Z,8Z,10E,14Z)-eicosatetraenoate = 12-oxo-(5Z,8Z,10E,14Z)-eicosatetraenoate + H2O. It catalyses the reaction (15S)-hydroperoxy-(5Z,8Z,11Z,13E)-eicosatetraenoate = 15-oxo-(5Z,8Z,11Z,13E)-eicosatetraenoate + H2O. The catalysed reaction is (13S)-hydroperoxy-(9Z,11E)-octadecadienoate = 13-oxo-(9Z,11E)-octadecadienoate + H2O. Its pathway is steroid hormone biosynthesis. The protein operates within cofactor metabolism; retinol metabolism. It functions in the pathway lipid metabolism; arachidonate metabolism. With respect to regulation, enzyme activity is increased by cytochrome b5. Enzyme activity is increased by liposomes containing anionic phospholipids, phosphatidic acid and cardiolipin. Inhibited by naringenin with an IC(50) of 5 uM. A cytochrome P450 monooxygenase involved in the metabolism of various endogenous substrates, including fatty acids, steroid hormones and vitamins. Mechanistically, uses molecular oxygen inserting one oxygen atom into a substrate, and reducing the second into a water molecule, with two electrons provided by NADPH via cytochrome P450 reductase (NADPH--hemoprotein reductase). Exhibits catalytic activity for the formation of hydroxyestrogens from 17beta-estradiol (E2), namely 2- and 4-hydroxy E2. Metabolizes testosterone and progesterone to B or D ring hydroxylated metabolites. May act as a major enzyme for all-trans retinoic acid biosynthesis in extrahepatic tissues. Catalyzes two successive oxidative transformation of all-trans retinol to all-trans retinal and then to the active form all-trans retinoic acid. Catalyzes the epoxidation of double bonds of certain PUFA. Converts arachidonic acid toward epoxyeicosatrienoic acid (EpETrE) regioisomers, 8,9-, 11,12-, and 14,15- EpETrE, that function as lipid mediators in the vascular system. Additionally, displays dehydratase activity toward oxygenated eicosanoids including hydroperoxyeicosatetraenoates (HpETEs). This activity is independent of cytochrome P450 reductase, NADPH, and O2. Also involved in the oxidative metabolism of xenobiotics, particularly converting polycyclic aromatic hydrocarbons and heterocyclic aryl amines procarcinogens to DNA-damaging products. Plays an important role in retinal vascular development. Under ambient/hyperoxic O2 conditions, promotes angiogenesis and capillary morphogenesis of retinal endothelial cells and pericytes, likely by metabolizing the oxygenated products symptomatic of oxidative stress. Also, contributes to oxidative homeostasis and ultrastructural organization and function of trabecular meshwork tissue through modulation of POSTN expression. This Rattus norvegicus (Rat) protein is Cytochrome P450 1B1.